Consider the following 391-residue polypeptide: 8-amino-7-oxononanoate synthase (391 aa).

Arginine 24 is a binding site for substrate. Residue 112-113 coordinates pyridoxal 5'-phosphate; the sequence is GY. Residue histidine 137 participates in substrate binding. Serine 183, histidine 211, and threonine 240 together coordinate pyridoxal 5'-phosphate. Residue lysine 243 is modified to N6-(pyridoxal phosphate)lysine. Threonine 357 contacts substrate.

The protein belongs to the class-II pyridoxal-phosphate-dependent aminotransferase family. BioF subfamily. In terms of assembly, homodimer. The cofactor is pyridoxal 5'-phosphate.

The catalysed reaction is 6-carboxyhexanoyl-[ACP] + L-alanine + H(+) = (8S)-8-amino-7-oxononanoate + holo-[ACP] + CO2. Its pathway is cofactor biosynthesis; biotin biosynthesis. Functionally, catalyzes the decarboxylative condensation of pimeloyl-[acyl-carrier protein] and L-alanine to produce 8-amino-7-oxononanoate (AON), [acyl-carrier protein], and carbon dioxide. The protein is 8-amino-7-oxononanoate synthase of Alkalilimnicola ehrlichii (strain ATCC BAA-1101 / DSM 17681 / MLHE-1).